A 500-amino-acid polypeptide reads, in one-letter code: Probable cytosol aminopeptidase (500 aa).

Lysine 264 and aspartate 269 together coordinate Mn(2+). The active site involves lysine 276. Mn(2+)-binding residues include aspartate 287, aspartate 346, and glutamate 348. Arginine 350 is a catalytic residue.

The protein belongs to the peptidase M17 family. The cofactor is Mn(2+).

Its subcellular location is the cytoplasm. It carries out the reaction Release of an N-terminal amino acid, Xaa-|-Yaa-, in which Xaa is preferably Leu, but may be other amino acids including Pro although not Arg or Lys, and Yaa may be Pro. Amino acid amides and methyl esters are also readily hydrolyzed, but rates on arylamides are exceedingly low.. The catalysed reaction is Release of an N-terminal amino acid, preferentially leucine, but not glutamic or aspartic acids.. In terms of biological role, presumably involved in the processing and regular turnover of intracellular proteins. Catalyzes the removal of unsubstituted N-terminal amino acids from various peptides. The chain is Probable cytosol aminopeptidase from Nitrobacter hamburgensis (strain DSM 10229 / NCIMB 13809 / X14).